A 171-amino-acid polypeptide reads, in one-letter code: Endoribonuclease ToxN (171 aa).

This sequence belongs to the ToxN/AbiQ toxin family. One ToxN monomer binds to a 36-nt-long single repeat of the ToxI RNA; this complex forms a triangular heterohexameric complex with ToxN connected by the ToxI RNA to another toxin molecule. The ToxI repeat forms a pseudoknot which occludes the toxin active site. Interaction of ToxI with ToxN partially inhibits the latter's endoribonuclease activity in vitro. The complex self-assembles in vitro with either full-length or processed single repeats; during the process the precursor is processed.

Toxic component of a type III toxin-antitoxin (TA) system. An endoribonuclease which is active independently of the ribosome, cleaving between the second and third A of AAA(U/G) sequences, although not all occurrences of this tetranucleotide are cleaved. Digests many mRNA species, including its own transcript and its cognate antitoxin RNA ToxI. ToxI has 5.5 nearly identical 36 nucleotide-long repeats (a single repeat neutralizes the toxin in vivo); a single repeat folds into a pseudoknot which binds the toxin. The ToxI precursor RNA is a preferential target in vivo and is progressively degraded to single repeat lengths as ToxN-ToxI complex self-assembly occurs. In vivo expression of ToxI antitoxin inhibits endonuclease activity of ToxN. The toxin alone inhibits growth when expressed in E.coli without causing cell lysis; this bacteriostatic effect is neutralized by cognate RNA antitoxin ToxI. Non-cognate antitoxin RNA from B.thuringiensis does not inhibit this toxin. The RNA antitoxin is less stable than the proteinaceous toxin; synthesis of ToxI in the absence of new ToxN synthesis restores growth and also detectable accumulation of the ToxN protein. Negatively regulates its own operon in complex with ToxI. The toxin-antitoxin system functions in plasmid maintenance (a plasmid addiction system). Its function is as follows. The TA system protects P.atrosepticum strain 1043 against phage phiM1 and phiA2, E.coli against some but not all coliphages and S.marcescens against some bacteriophages, causing an abortive infection (Abi phenotype). Also protects P.atrosepticum strain 1043 against phage phiTE; phage that escape Abi and grow in this bacterium have evolved a pseudo-ToxI RNA by expanding a pre-existing sequence similar to the bona fide ToxI repeats. This chain is Endoribonuclease ToxN, found in Pectobacterium atrosepticum (Erwinia carotovora subsp. atroseptica).